We begin with the raw amino-acid sequence, 211 residues long: Superoxide dismutase [Mn], mitochondrial (211 aa).

A mitochondrion-targeting transit peptide spans 1 to 24; the sequence is MLCRAVCSASRRLAPALGILGVRQ. Histidine 50 lines the Mn(2+) pocket. Tyrosine 58 carries the 3'-nitrotyrosine modification. N6-acetyllysine; alternate occurs at positions 68 and 75. Residues lysine 68 and lysine 75 each carry the N6-succinyllysine; alternate modification. Histidine 98 lines the Mn(2+) pocket. Residue lysine 114 is modified to N6-acetyllysine. Lysine 122 and lysine 130 each carry N6-acetyllysine; alternate. Lysine 122 and lysine 130 each carry N6-succinyllysine; alternate. The Mn(2+) site is built by aspartate 183 and histidine 187. Lysine 202 is subject to N6-acetyllysine.

It belongs to the iron/manganese superoxide dismutase family. Homotetramer. The cofactor is Mn(2+). In terms of processing, nitrated under oxidative stress. Nitration coupled with oxidation inhibits the catalytic activity. Post-translationally, acetylation at Lys-122 decreases enzymatic activity. Deacetylated by SIRT3 upon exposure to ionizing radiations or after long fasting. Polyubiquitinated; leading to proteasomal degradation. Deubiquitinated by USP36 which increases protein stability.

The protein resides in the mitochondrion matrix. It catalyses the reaction 2 superoxide + 2 H(+) = H2O2 + O2. In terms of biological role, destroys superoxide anion radicals which are normally produced within the cells and which are toxic to biological systems. The chain is Superoxide dismutase [Mn], mitochondrial (SOD2) from Cavia porcellus (Guinea pig).